The primary structure comprises 592 residues: Aspartate--tRNA ligase (592 aa).

E173 is a binding site for L-aspartate. The tract at residues 197–200 (QLFK) is aspartate. R219 contacts L-aspartate. Residues 219-221 (RDE) and Q228 contribute to the ATP site. An L-aspartate-binding site is contributed by H448. E482 provides a ligand contact to ATP. R489 serves as a coordination point for L-aspartate. 534–537 (GLDR) contributes to the ATP binding site.

It belongs to the class-II aminoacyl-tRNA synthetase family. Type 1 subfamily. In terms of assembly, homodimer.

The protein resides in the cytoplasm. The enzyme catalyses tRNA(Asp) + L-aspartate + ATP = L-aspartyl-tRNA(Asp) + AMP + diphosphate. In terms of biological role, catalyzes the attachment of L-aspartate to tRNA(Asp) in a two-step reaction: L-aspartate is first activated by ATP to form Asp-AMP and then transferred to the acceptor end of tRNA(Asp). The chain is Aspartate--tRNA ligase from Shewanella baltica (strain OS223).